We begin with the raw amino-acid sequence, 432 residues long: MKFTLVATVLLTFSLSAFAVEYPVLTTASPDQVGFDSQKLHRLDGWIQNQIDAGYPSINLLVIKDNHIVLQKAWGYAKKYDGSTLLAHPILATTNTMYDLASNTKMYATNFALQKLVYEGKIDVNDLVSKYIPDFKDMPGDKIKGKDKLRIIDILHHVAGFPADPQYPNKNVAGKLFSQSKSTTLEMIKKTPLEYQPGSKHIYSDVDYMILGFIIESITAMPLDRYVETTIYKPLGLKHTVFNPLMKGFTPPQIAATELHGNTRDGVIHFPNIRTNTLWGQVHDEKAWYSMGGVSGHAGLFSDTHDIAVLMQVMLNGGGYGNVKLFDDKTVAQFTRRSPEDATFGLGWRVNGNASMTPTFGVLASPQTYGHTGWTGTLTSIDPVNHMAIVILGNRPHSPVANPKVNPNVFVSGLLPAATYGWIVDQIYGSLK.

Residues 7-25 form a helical; Signal-anchor membrane-spanning segment; sequence ATVLLTFSLSAFAVEYPVL.

This sequence belongs to the peptidase S12 family. YfeW subfamily.

The protein localises to the cell inner membrane. It catalyses the reaction Preferential cleavage: (Ac)2-L-Lys-D-Ala-|-D-Ala. Also transpeptidation of peptidyl-alanyl moieties that are N-acyl substituents of D-alanine.. The sequence is that of Putative D-alanyl-D-alanine carboxypeptidase from Salmonella agona (strain SL483).